The chain runs to 195 residues: Neurensin-1 (195 aa).

Helical transmembrane passes span 66-86 (LISG…GFLV) and 120-140 (AVLF…SVFV).

The protein belongs to the VMP family. Expressed in brain. Not detectable in other tissues tested.

Its subcellular location is the membrane. The protein localises to the cell projection. The protein resides in the neuron projection. Its function is as follows. May play an important role in neural organelle transport, and in transduction of nerve signals or in nerve growth. May play a role in neurite extension. May play a role in memory consolidation. The sequence is that of Neurensin-1 from Homo sapiens (Human).